A 262-amino-acid polypeptide reads, in one-letter code: Probable esterase azaC (262 aa).

Active-site charge relay system residues include Ser-119, Asp-188, and His-216.

This sequence belongs to the LovG family.

The protein operates within secondary metabolite biosynthesis. In terms of biological role, probable esterase; part of the gene cluster that mediates the biosynthesis of azaphilones, a class of fungal metabolites characterized by a highly oxygenated pyrano-quinone bicyclic core and exhibiting a broad range of bioactivities. In the first step, the non-reducing polyketide synthase azaA forms the hexaketide precursor from successive condensations of five malonyl-CoA units, presumably with a simple acetyl-CoA starter unit. The reactive polyketide chain then undergoes a PT-mediated C2-C7 cyclization to afford the aromatic ring and is eventually released as an aldehyde through the R-domain. The putative ketoreductase azaE is proposed to catalyze the reduction of the terminal ketone resulting in the early culture product FK17-P2a. The monooxygenase azaH was demonstrated to be the only enzyme required to convert FK17-P2a to azanigerone E. AzaH first hydroxylates the benzaldehyde intermediate FK17-P2a at C4, which triggers the formation of the pyran-ring to afford azanigerone E. In parallel, the 2,4-dimethylhexanoyl chain is synthesized by the HR-PKS azaB and is proposed to be transferred to the C4-hydroxyl of azanigerone E by the acyltransferase azaD directly from the ACP domain of azaB. Alternatively, the 2,4-dimethyl-hexanoyl chain may be offloaded from the HR-PKS as a carboxylic acid and converted to an acyl-CoA by azaF. The resulting acyl-CoA molecule could then be taken up as a substrate by AzaD to form azanigerone B. To yield the carboxylic acid substituent in azanigerone A, the hydroxypropyl side chain of azanigerone B would need to undergo a C-C oxidative cleavage catalyzed by cytochrome P450 AzaI. AzaI is proposed to act on a vicinal diol that leads to a C-C bond scission either through an alkoxyradical intermediate or a peroxy complex. In the biosynthesis of azanigerone A, azanigerone B first undergoes hydroxylation at C10, possibly catalyzed by one of the two FAD-dependent monooxygenases encoded in the cluster, azaG or azaL, resulting in the vicinal diol azanigerone C. Oxidative cleavage of azanigerone C by azaI would yield the corresponding aldehyde derivative of azanigerone A. Finally, the dehydrogenase azaJ is proposed to convert the aldehyde functional group into the carboxylic acid, completing the conversion from azanigerone B to azanigerone A. Alternatively, the oxidation of aldehyde to carboxylic acid may be catalyzed by the same P450 enzyme azaI via consecutive oxidation or by endogenous alcohol dehydrogenase. In Aspergillus niger (strain ATCC 1015 / CBS 113.46 / FGSC A1144 / LSHB Ac4 / NCTC 3858a / NRRL 328 / USDA 3528.7), this protein is Probable esterase azaC.